The primary structure comprises 127 residues: MAKEQKEVRDLQEGNYVMMEDAACQINAYSTAKPGKHGSAKARIEAEGVFDGKKRSLSQPVDAKIWVPIVNRKQGQIVSKESDTVAQVMDLETYETVTMQIPGELDIQADENIEYLEFEGQRKILQE.

Hypusine is present on K36.

The protein belongs to the eIF-5A family.

The protein localises to the cytoplasm. Functionally, functions by promoting the formation of the first peptide bond. This Halobacterium salinarum (strain ATCC 700922 / JCM 11081 / NRC-1) (Halobacterium halobium) protein is Translation initiation factor 5A (eif5a).